A 135-amino-acid polypeptide reads, in one-letter code: Large ribosomal subunit protein uL22c (135 aa).

This sequence belongs to the universal ribosomal protein uL22 family. As to quaternary structure, part of the 50S ribosomal subunit.

The protein localises to the plastid. Its function is as follows. This protein binds specifically to 23S rRNA. Functionally, the globular domain of the protein is located near the polypeptide exit tunnel on the outside of the subunit, while an extended beta-hairpin is found that lines the wall of the exit tunnel in the center of the 70S ribosome. The chain is Large ribosomal subunit protein uL22c (rpl22) from Cuscuta exaltata (Tall dodder).